Reading from the N-terminus, the 328-residue chain is tRNA uridine(34) hydroxylase (328 aa).

The region spanning leucine 130–glutamate 224 is the Rhodanese domain. The Cysteine persulfide intermediate role is filled by cysteine 184.

This sequence belongs to the TrhO family.

The enzyme catalyses uridine(34) in tRNA + AH2 + O2 = 5-hydroxyuridine(34) in tRNA + A + H2O. Its function is as follows. Catalyzes oxygen-dependent 5-hydroxyuridine (ho5U) modification at position 34 in tRNAs. This chain is tRNA uridine(34) hydroxylase, found in Streptococcus agalactiae serotype Ia (strain ATCC 27591 / A909 / CDC SS700).